The chain runs to 72 residues: Protein kish-A (72 aa).

Residues 1 to 26 (MSAIFNFQSLLTVILLLICTCAYIRS) form the signal peptide. Topologically, residues 27-53 (LAPSLLDKNKSGLLGIFWKCARIGERK) are extracellular. A glycan (N-linked (GlcNAc...) asparagine) is linked at Asn35. Residues 54 to 71 (SPYVAVCCVVMAFSILFM) form a helical membrane-spanning segment. Gln72 is a topological domain (cytoplasmic).

It belongs to the KISH family.

It localises to the golgi apparatus membrane. In terms of biological role, involved in the early part of the secretory pathway. The protein is Protein kish-A (TMEM167A) of Taeniopygia guttata (Zebra finch).